Here is a 179-residue protein sequence, read N- to C-terminus: Large ribosomal subunit protein uL6 (179 aa).

It belongs to the universal ribosomal protein uL6 family. In terms of assembly, part of the 50S ribosomal subunit.

Its function is as follows. This protein binds to the 23S rRNA, and is important in its secondary structure. It is located near the subunit interface in the base of the L7/L12 stalk, and near the tRNA binding site of the peptidyltransferase center. This Clostridium acetobutylicum (strain ATCC 824 / DSM 792 / JCM 1419 / IAM 19013 / LMG 5710 / NBRC 13948 / NRRL B-527 / VKM B-1787 / 2291 / W) protein is Large ribosomal subunit protein uL6.